The following is a 467-amino-acid chain: MATEYALRMGDGKRVYLTKEKIVSEIEAGTADAADLGEIPALSANEMDKLAEILMMPGKTVSVEQGMEIPVTHDIGTIRLDGDQGNSGVGIPSSRLVGCMTHERAFGADTMELGHIDYSFKPVKPVVSNECQAMEVCQQNMVIPLFYGAMPNMGLYYTPDGPFENPGDLMKAFKIQEAWESMEHAAEHLTRDTVWVMQKLFASGADGVNFDTTGAAGDGDMYGTLHAIEALRKEFPDMYIEAGMAGECVLGMHGNLQYDGVTLAGLWPHQQAPLVAKAGANVFGPVCNTNTSKTSAWNLARAVTFMKAAVEASPIPCHVDMGMGVGGIPMLETPPIDAVTRASKAMVEIAGVDGIOIGVGDPLGMPIAHIMASGMTGMRAAGDLVARMEFSKNMRIGEAKEYVAKKLGVDKMDLVDEHVMRELREELDIGIITSVPGAAKGIAAKMNIEKLLDIKINSCNLFRKQIA.

Pyl356 is a non-standard amino acid (pyrrolysine).

Belongs to the dimethylamine methyltransferase family. In terms of assembly, may form homotetramers or homopentamers.

It carries out the reaction Co(I)-[dimethylamine-specific corrinoid protein] + dimethylamine + H(+) = methyl-Co(III)-[dimethylamine-specific corrinoid protein] + methylamine. Its pathway is one-carbon metabolism; methanogenesis from dimethylamine. In terms of biological role, catalyzes the transfer of a methyl group from dimethylamine to the corrinoid cofactor of MtbC. The major or perhaps only DMA methyltransferase expressed under inducing conditions. This Methanosarcina barkeri protein is Dimethylamine methyltransferase MtbB1.